The sequence spans 339 residues: DNA-directed RNA polymerase subunit alpha (339 aa).

An alpha N-terminal domain (alpha-NTD) region spans residues 1–233; the sequence is MVREEVAGST…DLFLPFLHAE (233 aa). The tract at residues 264–339 is alpha C-terminal domain (alpha-CTD); that stretch reads KKGIPLNCIF…IDLLKNKLSF (76 aa).

Belongs to the RNA polymerase alpha chain family. In plastids the minimal PEP RNA polymerase catalytic core is composed of four subunits: alpha, beta, beta', and beta''. When a (nuclear-encoded) sigma factor is associated with the core the holoenzyme is formed, which can initiate transcription.

The protein resides in the plastid. It localises to the chloroplast. The catalysed reaction is RNA(n) + a ribonucleoside 5'-triphosphate = RNA(n+1) + diphosphate. Functionally, DNA-dependent RNA polymerase catalyzes the transcription of DNA into RNA using the four ribonucleoside triphosphates as substrates. In Festucopsis festucoides, this protein is DNA-directed RNA polymerase subunit alpha.